We begin with the raw amino-acid sequence, 70 residues long: Small ribosomal subunit protein bS21 (70 aa).

Belongs to the bacterial ribosomal protein bS21 family.

The polypeptide is Small ribosomal subunit protein bS21 (Polynucleobacter asymbioticus (strain DSM 18221 / CIP 109841 / QLW-P1DMWA-1) (Polynucleobacter necessarius subsp. asymbioticus)).